A 233-amino-acid chain; its full sequence is Orotidine 5'-phosphate decarboxylase (233 aa).

Substrate contacts are provided by residues D12, K34, 61 to 70 (DLKFHDIPNT), T120, R181, Q190, G210, and R211. The active-site Proton donor is K63.

This sequence belongs to the OMP decarboxylase family. Type 1 subfamily. In terms of assembly, homodimer.

The catalysed reaction is orotidine 5'-phosphate + H(+) = UMP + CO2. Its pathway is pyrimidine metabolism; UMP biosynthesis via de novo pathway; UMP from orotate: step 2/2. In terms of biological role, catalyzes the decarboxylation of orotidine 5'-monophosphate (OMP) to uridine 5'-monophosphate (UMP). The protein is Orotidine 5'-phosphate decarboxylase of Hahella chejuensis (strain KCTC 2396).